The chain runs to 486 residues: uncharacterized protein (486 aa).

The signal sequence occupies residues 1–25 (MGTMRSVYLIIIIILFFAFISLSFG). Composition is skewed to basic and acidic residues over residues 306–316 (KKEEKENEESS) and 326–349 (KKEEKSQTQETKKPSKNEMNKQEK). Residues 306–349 (KKEEKENEESSKTINQMQRHKKEEKSQTQETKKPSKNEMNKQEK) are disordered.

This is an uncharacterized protein from Methanocaldococcus jannaschii (strain ATCC 43067 / DSM 2661 / JAL-1 / JCM 10045 / NBRC 100440) (Methanococcus jannaschii).